The primary structure comprises 319 residues: tRNA U34 carboxymethyltransferase (319 aa).

Residues K88, W102, K107, G126, 176-177, M192, Y196, and R311 contribute to the carboxy-S-adenosyl-L-methionine site; that span reads LE.

The protein belongs to the class I-like SAM-binding methyltransferase superfamily. CmoB family. As to quaternary structure, homotetramer.

It catalyses the reaction carboxy-S-adenosyl-L-methionine + 5-hydroxyuridine(34) in tRNA = 5-carboxymethoxyuridine(34) in tRNA + S-adenosyl-L-homocysteine + H(+). Catalyzes carboxymethyl transfer from carboxy-S-adenosyl-L-methionine (Cx-SAM) to 5-hydroxyuridine (ho5U) to form 5-carboxymethoxyuridine (cmo5U) at position 34 in tRNAs. This chain is tRNA U34 carboxymethyltransferase, found in Pseudomonas syringae pv. syringae (strain B728a).